Reading from the N-terminus, the 235-residue chain is Proteasome subunit alpha type-2-A (235 aa).

Residue lysine 64 forms a Glycyl lysine isopeptide (Lys-Gly) (interchain with G-Cter in ubiquitin) linkage.

Belongs to the peptidase T1A family. In terms of assembly, component of the 20S core complex of the 26S proteasome. The 26S proteasome is composed of a core protease (CP), known as the 20S proteasome, capped at one or both ends by the 19S regulatory particle (RP/PA700). The 20S proteasome core is composed of 28 subunits that are arranged in four stacked rings, resulting in a barrel-shaped structure. The two end rings are each formed by seven alpha subunits, and the two central rings are each formed by seven beta subunits. The catalytic chamber with the active sites is on the inside of the barrel.

It is found in the cytoplasm. The protein resides in the nucleus. Its function is as follows. The proteasome is a multicatalytic proteinase complex which is characterized by its ability to cleave peptides with Arg, Phe, Tyr, Leu, and Glu adjacent to the leaving group at neutral or slightly basic pH. The proteasome has an ATP-dependent proteolytic activity. In Arabidopsis thaliana (Mouse-ear cress), this protein is Proteasome subunit alpha type-2-A (PAB1).